Consider the following 92-residue polypeptide: Small ribosomal subunit protein uS19c (92 aa).

The protein belongs to the universal ribosomal protein uS19 family.

It is found in the plastid. The protein localises to the chloroplast. In terms of biological role, protein S19 forms a complex with S13 that binds strongly to the 16S ribosomal RNA. This Nandina domestica (Heavenly bamboo) protein is Small ribosomal subunit protein uS19c.